Reading from the N-terminus, the 455-residue chain is Phosphoglucosamine mutase (455 aa).

Catalysis depends on serine 106, which acts as the Phosphoserine intermediate. Mg(2+) contacts are provided by serine 106, aspartate 245, aspartate 247, and aspartate 249. Serine 106 carries the phosphoserine modification.

Belongs to the phosphohexose mutase family. Requires Mg(2+) as cofactor. In terms of processing, activated by phosphorylation.

The enzyme catalyses alpha-D-glucosamine 1-phosphate = D-glucosamine 6-phosphate. Functionally, catalyzes the conversion of glucosamine-6-phosphate to glucosamine-1-phosphate. The sequence is that of Phosphoglucosamine mutase from Acaryochloris marina (strain MBIC 11017).